We begin with the raw amino-acid sequence, 546 residues long: Chaperonin GroEL (546 aa).

ATP contacts are provided by residues 29-32 (TLGP), Lys50, 86-90 (DGTTT), Gly414, 477-479 (NAA), and Asp493.

This sequence belongs to the chaperonin (HSP60) family. Forms a cylinder of 14 subunits composed of two heptameric rings stacked back-to-back. Interacts with the co-chaperonin GroES.

It is found in the cytoplasm. It catalyses the reaction ATP + H2O + a folded polypeptide = ADP + phosphate + an unfolded polypeptide.. Functionally, together with its co-chaperonin GroES, plays an essential role in assisting protein folding. The GroEL-GroES system forms a nano-cage that allows encapsulation of the non-native substrate proteins and provides a physical environment optimized to promote and accelerate protein folding. The sequence is that of Chaperonin GroEL from Geobacter metallireducens (strain ATCC 53774 / DSM 7210 / GS-15).